The primary structure comprises 428 residues: Serine--tRNA ligase (428 aa).

231 to 233 (TSE) contacts L-serine. ATP-binding positions include 262-264 (RRE) and Val-278. An L-serine-binding site is contributed by Glu-285. 349 to 352 (ELTS) serves as a coordination point for ATP. Thr-384 contacts L-serine.

It belongs to the class-II aminoacyl-tRNA synthetase family. Type-1 seryl-tRNA synthetase subfamily. In terms of assembly, homodimer. The tRNA molecule binds across the dimer.

Its subcellular location is the cytoplasm. The catalysed reaction is tRNA(Ser) + L-serine + ATP = L-seryl-tRNA(Ser) + AMP + diphosphate + H(+). The enzyme catalyses tRNA(Sec) + L-serine + ATP = L-seryl-tRNA(Sec) + AMP + diphosphate + H(+). It participates in aminoacyl-tRNA biosynthesis; selenocysteinyl-tRNA(Sec) biosynthesis; L-seryl-tRNA(Sec) from L-serine and tRNA(Sec): step 1/1. Catalyzes the attachment of serine to tRNA(Ser). Is also able to aminoacylate tRNA(Sec) with serine, to form the misacylated tRNA L-seryl-tRNA(Sec), which will be further converted into selenocysteinyl-tRNA(Sec). The chain is Serine--tRNA ligase from Bifidobacterium longum (strain DJO10A).